A 75-amino-acid polypeptide reads, in one-letter code: Large ribosomal subunit protein eL14 (75 aa).

Belongs to the eukaryotic ribosomal protein eL14 family.

The sequence is that of Large ribosomal subunit protein eL14 from Methanothermobacter thermautotrophicus (strain ATCC 29096 / DSM 1053 / JCM 10044 / NBRC 100330 / Delta H) (Methanobacterium thermoautotrophicum).